Reading from the N-terminus, the 538-residue chain is Diacylglycerol O-acyltransferase 1-1 (538 aa).

2 disordered regions span residues 1–39 and 54–106; these read MVGS…GAIV and AAAA…GGGR. Low complexity predominate over residues 69–83; the sequence is EAASGEPSSSSSSSP. The next 7 membrane-spanning stretches (helical) occupy residues 136–156, 186–206, 218–238, 245–265, 293–313, 326–346, and 382–402; these read AIFK…LVAV, WPLL…FAVE, VATC…VLVI, VLSG…LVSF, NLQP…TLCY, GWLI…GFII, and LWLC…AEIL. The FYXDWWN motif signature appears at 409 to 415; sequence FYKDWWN. Helical transmembrane passes span 451–471, 474–494, and 505–525; these read VAVL…VAVP, ILKF…VLTA, and VGNM…CLLL. Residue His464 is part of the active site.

This sequence belongs to the membrane-bound acyltransferase family. Sterol o-acyltransferase subfamily.

The protein resides in the endoplasmic reticulum membrane. The enzyme catalyses an acyl-CoA + a 1,2-diacyl-sn-glycerol = a triacyl-sn-glycerol + CoA. It functions in the pathway glycerolipid metabolism; triacylglycerol biosynthesis. Involved in triacylglycerol (TAG) synthesis. Catalyzes the acylation of the sn-3 hydroxy group of sn-1,2-diacylglycerol using acyl-CoA. The chain is Diacylglycerol O-acyltransferase 1-1 from Oryza sativa subsp. japonica (Rice).